The chain runs to 431 residues: Glutamate-1-semialdehyde 2,1-aminomutase (431 aa).

Lysine 270 carries the N6-(pyridoxal phosphate)lysine modification.

It belongs to the class-III pyridoxal-phosphate-dependent aminotransferase family. HemL subfamily. As to quaternary structure, homodimer. Pyridoxal 5'-phosphate is required as a cofactor.

It is found in the cytoplasm. It carries out the reaction (S)-4-amino-5-oxopentanoate = 5-aminolevulinate. The protein operates within porphyrin-containing compound metabolism; protoporphyrin-IX biosynthesis; 5-aminolevulinate from L-glutamyl-tRNA(Glu): step 2/2. This chain is Glutamate-1-semialdehyde 2,1-aminomutase, found in Limosilactobacillus reuteri subsp. reuteri (strain JCM 1112) (Lactobacillus reuteri).